Here is a 63-residue protein sequence, read N- to C-terminus: MSKVCEICGKGPSFGNNVSHANNKTRTTWHPNLQKVKAVRNGSVKTIKVCTRCIRSGHVTKAV.

Belongs to the bacterial ribosomal protein bL28 family.

The sequence is that of Large ribosomal subunit protein bL28 from Geobacter sulfurreducens (strain ATCC 51573 / DSM 12127 / PCA).